Reading from the N-terminus, the 228-residue chain is PKHD-type hydroxylase XAC2942 (228 aa).

One can recognise a Fe2OG dioxygenase domain in the interval 78–180; that stretch reads RIYPPLFNRY…RVACFFWAQS (103 aa). Fe cation is bound by residues H96, D98, and H161. R171 provides a ligand contact to 2-oxoglutarate.

The cofactor is Fe(2+). Requires L-ascorbate as cofactor.

In Xanthomonas axonopodis pv. citri (strain 306), this protein is PKHD-type hydroxylase XAC2942.